A 121-amino-acid chain; its full sequence is Neuromedin-B (121 aa).

The signal sequence occupies residues 1–24 (MTLRARGARLLGGLLFFTLLAAGA). Met-56 bears the Methionine amide mark. A propeptide spanning residues 60 to 121 (SLEPPNPSLL…RRLLVQTLEK (62 aa)) is cleaved from the precursor.

The protein belongs to the bombesin/neuromedin-B/ranatensin family. Higher expression in the central nervous system (CNS) than in peripheral tissues. Highest levels are found in the olfactory bulb. Relatively high levels in the CNS (including the cerebral cortex, cerebellum, spinal cord, medulla oblongata, midbrain, hypothalamus, hippocampus, and hypophysis) and in peripheral tissues such as the pancreas, adrenal gland, testis, ovary and cecum. Moderate levels are found in the rectum, heart and pons with low expression levels detected in the bone marrow and duodenum. Other tissues show no or low levels of expression.

The protein resides in the secreted. It is found in the cell projection. The protein localises to the neuron projection. In terms of biological role, stimulates smooth muscle contraction. Induces sighing by acting directly on the pre-Botzinger complex, a cluster of several thousand neurons in the ventrolateral medulla responsible for inspiration during respiratory activity. Contributes to the induction of sneezing following exposure to chemical irritants or allergens which causes release of NMB by nasal sensory neurons and activation of NMBR-expressing neurons in the sneeze-evoking region of the brainstem. These in turn activate neurons of the caudal ventral respiratory group, giving rise to the sneezing response. Contributes to induction of acute itch, possibly through activation of the NMBR receptor on dorsal root ganglion neurons. Increases expression of NMBR and steroidogenic mediators STAR, CYP11A1 and HSD3B1 in Leydig cells, induces secretion of testosterone by Leydig cells and also promotes Leydig cell proliferation. Plays a role in the innate immune response to influenza A virus infection by enhancing interferon alpha expression and reducing expression of IL6. Plays a role in CSF1-induced proliferation of osteoclast precursors by contributing to positive regulation of the expression of the CSF1 receptor CSF1R. This chain is Neuromedin-B (NMB), found in Sus scrofa (Pig).